Reading from the N-terminus, the 359-residue chain is Peptide chain release factor 1 (359 aa).

Residue glutamine 235 is modified to N5-methylglutamine.

Belongs to the prokaryotic/mitochondrial release factor family. Methylated by PrmC. Methylation increases the termination efficiency of RF1.

It is found in the cytoplasm. Functionally, peptide chain release factor 1 directs the termination of translation in response to the peptide chain termination codons UAG and UAA. The chain is Peptide chain release factor 1 from Methylibium petroleiphilum (strain ATCC BAA-1232 / LMG 22953 / PM1).